The chain runs to 988 residues: RecQ-like DNA helicase blm-1 (988 aa).

A disordered region spans residues 46 to 119 (CEEREEEYID…QFPSRPQKRL (74 aa)). A run of 2 repeats spans residues 121-129 (DPPIVDLDE) and 130-138 (EPPIVDLDD). The tract at residues 121–138 (DPPIVDLDEEPPIVDLDD) is 2 X 9 AA tandem repeats of [DE]-P-P-I-V-D-L-D-[ED]. The disordered stretch occupies residues 148-185 (TSEEVVSGDIAPEEEEEEGHDSFDDFESVPAQPPSKNT). Residues 158-174 (APEEEEEEGHDSFDDFE) are compositionally biased toward acidic residues. ATP contacts are provided by residues 248-252 (FRHRQ) and 272-276 (GAGKS). Positions 256–433 (ILSTLMGHDT…RDHLKMQNSK (178 aa)) constitute a Helicase ATP-binding domain. Positions 375-378 (DEAH) match the DEAH box motif. The 146-residue stretch at 458–603 (NVVEKMKQLY…VRSMHLNNVL (146 aa)) folds into the Helicase C-terminal domain. Residues 478–480 (SRK) are 3' overhang DNA-binding. Arg-562 contacts ATP. The interval 580 to 583 (RLRR) is 3' overhang DNA-binding. The Zn(2+) site is built by Cys-615, Cys-633, Cys-640, and Cys-643. 3' overhang DNA-binding regions lie at residues 676 to 678 (TLK), 687 to 691 (ALIKK), and 736 to 742 (YSVPNQA). The HRDC domain maps to 807 to 888 (GDVFTRCLQD…ATYWKQVDER (82 aa)). A disordered region spans residues 930–988 (GGGGCRGRGKKRAFSGFSSGRATKKPRATAPSARGKTSGRGGAKPATSLKRNMYPATSM). Residues 939-955 (KKRAFSGFSSGRATKKP) carry the Nuclear localization signal motif.

It belongs to the helicase family. RecQ subfamily. In terms of assembly, monomer. Homodimer (via N-terminus). Homotetramer (via N-terminus); dimer of dimers. Homohexamer (via N-terminus). Self-association negatively regulates DNA unwinding amplitude and rate. Oligomer forms dissociate into monomer in presence of ATP. Component of the BTR double Holliday Junction dissolution complex composed of at least him-6, top-3, rmh-1 and rmif-2, which is involved in double strand break repair in the germline. May interact with rmh-1; the interaction is required for mutual stability and localization at nuclear foci. Forms a complex composed of cdc-48.1, him-6 and crp-1; within the complex, interacts with cdc-48.1. It depends on Zn(2+) as a cofactor.

Its subcellular location is the nucleus. It localises to the chromosome. It carries out the reaction Couples ATP hydrolysis with the unwinding of duplex DNA by translocating in the 3'-5' direction.. The catalysed reaction is ATP + H2O = ADP + phosphate + H(+). In terms of biological role, component of the BTR double Holliday Junction dissolution complex, which is involved in homologous recombination during meiotic double strand break in the germline. Stabilizes and positively regulates the localization of the BTR double Holliday Junction dissolution complex component rmh-1 at nuclear foci during meiotic recombination. Participates in DNA replication and repair. Exhibits a magnesium-dependent ATP-dependent DNA-helicase activity that unwinds single- and double-stranded DNA in a 3'-5' direction. Negatively regulates sister chromatid exchange (SCE). Functionally, ATP-dependent DNA helicase that unwinds single- and double-stranded DNA in a 3'-5' direction. Participates in DNA replication and repair. Negatively regulates sister chromatid exchange (SCE). Stimulates DNA 4-way junction branch migration and DNA Holliday junction dissolution. Binds single-stranded DNA (ssDNA), forked duplex DNA and DNA Holliday junction. The chain is RecQ-like DNA helicase blm-1 from Caenorhabditis elegans.